The following is a 130-amino-acid chain: Fumarate reductase subunit C (130 aa).

3 consecutive transmembrane segments (helical) span residues 30–50 (EGTS…VFAL), 60–80 (FVSF…LFAA), and 110–130 (IKAL…VALL).

The protein belongs to the FrdC family. Part of an enzyme complex containing four subunits: a flavoprotein (FrdA), an iron-sulfur protein (FrdB), and two hydrophobic anchor proteins (FrdC and FrdD).

It localises to the cell inner membrane. Functionally, two distinct, membrane-bound, FAD-containing enzymes are responsible for the catalysis of fumarate and succinate interconversion; fumarate reductase is used in anaerobic growth, and succinate dehydrogenase is used in aerobic growth. Anchors the catalytic components of the fumarate reductase complex to the cell inner membrane, binds quinones. The sequence is that of Fumarate reductase subunit C from Yersinia pseudotuberculosis serotype O:1b (strain IP 31758).